The chain runs to 206 residues: 2,3-bisphosphoglycerate-dependent phosphoglycerate mutase (206 aa).

Substrate contacts are provided by residues 9–16 (RHGQSEWN), 22–23 (TG), R61, 88–91 (ERDY), K99, 115–116 (RR), and 159–160 (GN). Residue H10 is the Tele-phosphohistidine intermediate of the active site. The Proton donor/acceptor role is filled by E88.

It belongs to the phosphoglycerate mutase family. BPG-dependent PGAM subfamily. Homodimer.

It carries out the reaction (2R)-2-phosphoglycerate = (2R)-3-phosphoglycerate. The protein operates within carbohydrate degradation; glycolysis; pyruvate from D-glyceraldehyde 3-phosphate: step 3/5. In terms of biological role, catalyzes the interconversion of 2-phosphoglycerate and 3-phosphoglycerate. This chain is 2,3-bisphosphoglycerate-dependent phosphoglycerate mutase, found in Mesorhizobium japonicum (strain LMG 29417 / CECT 9101 / MAFF 303099) (Mesorhizobium loti (strain MAFF 303099)).